A 319-amino-acid chain; its full sequence is Ribonuclease Z (319 aa).

Zn(2+) contacts are provided by histidine 62, histidine 64, aspartate 66, histidine 67, histidine 145, aspartate 215, and histidine 273. The active-site Proton acceptor is the aspartate 66.

This sequence belongs to the RNase Z family. Homodimer. Zn(2+) is required as a cofactor.

The catalysed reaction is Endonucleolytic cleavage of RNA, removing extra 3' nucleotides from tRNA precursor, generating 3' termini of tRNAs. A 3'-hydroxy group is left at the tRNA terminus and a 5'-phosphoryl group is left at the trailer molecule.. Functionally, zinc phosphodiesterase, which displays some tRNA 3'-processing endonuclease activity. Probably involved in tRNA maturation, by removing a 3'-trailer from precursor tRNA. The chain is Ribonuclease Z from Borrelia duttonii (strain Ly).